Consider the following 366-residue polypeptide: UDP-N-acetylglucosamine--N-acetylmuramyl-(pentapeptide) pyrophosphoryl-undecaprenol N-acetylglucosamine transferase (366 aa).

Residues 22–24, asparagine 134, arginine 170, serine 198, isoleucine 253, and glutamine 298 contribute to the UDP-N-acetyl-alpha-D-glucosamine site; that span reads TGG.

The protein belongs to the glycosyltransferase 28 family. MurG subfamily.

It localises to the cell inner membrane. The catalysed reaction is di-trans,octa-cis-undecaprenyl diphospho-N-acetyl-alpha-D-muramoyl-L-alanyl-D-glutamyl-meso-2,6-diaminopimeloyl-D-alanyl-D-alanine + UDP-N-acetyl-alpha-D-glucosamine = di-trans,octa-cis-undecaprenyl diphospho-[N-acetyl-alpha-D-glucosaminyl-(1-&gt;4)]-N-acetyl-alpha-D-muramoyl-L-alanyl-D-glutamyl-meso-2,6-diaminopimeloyl-D-alanyl-D-alanine + UDP + H(+). The protein operates within cell wall biogenesis; peptidoglycan biosynthesis. Cell wall formation. Catalyzes the transfer of a GlcNAc subunit on undecaprenyl-pyrophosphoryl-MurNAc-pentapeptide (lipid intermediate I) to form undecaprenyl-pyrophosphoryl-MurNAc-(pentapeptide)GlcNAc (lipid intermediate II). This Xylella fastidiosa (strain M12) protein is UDP-N-acetylglucosamine--N-acetylmuramyl-(pentapeptide) pyrophosphoryl-undecaprenol N-acetylglucosamine transferase.